The following is a 503-amino-acid chain: Lysine--tRNA ligase (503 aa).

E414 and E421 together coordinate Mg(2+).

Belongs to the class-II aminoacyl-tRNA synthetase family. As to quaternary structure, homodimer. Mg(2+) serves as cofactor.

It is found in the cytoplasm. The enzyme catalyses tRNA(Lys) + L-lysine + ATP = L-lysyl-tRNA(Lys) + AMP + diphosphate. The sequence is that of Lysine--tRNA ligase from Neisseria gonorrhoeae (strain ATCC 700825 / FA 1090).